The following is a 301-amino-acid chain: Prohibitin-2 (301 aa).

Necessary for transcriptional repression stretches follow at residues 19–49 (VGTA…GQRA) and 150–174 (ASQL…RAKD). Positions 190-237 (SREYTAAVEAKQVAQQEAQRAQFLVEKAKQEQKQKIVQAEGEATAAKM) form a coiled coil.

This sequence belongs to the prohibitin family. As to quaternary structure, the mitochondrial prohibitin complex consists of two subunits (PHB1 and PHB2), assembled into a membrane-associated ring-shaped supercomplex of approximately 1 mDa.

It is found in the mitochondrion inner membrane. It localises to the cytoplasm. The protein resides in the nucleus. Its subcellular location is the cell membrane. Protein with pleiotropic attributes mediated in a cell-compartment- and tissue-specific manner, which include the plasma membrane-associated cell signaling functions, mitochondrial chaperone, and transcriptional co-regulator of transcription factors and sex steroid hormones in the nucleus. In terms of biological role, in the mitochondria, together with PHB, forms large ring complexes (prohibitin complexes) in the inner mitochondrial membrane (IMM) and functions as a chaperone protein that stabilizes mitochondrial respiratory enzymes and maintains mitochondrial integrity in the IMM, which is required for mitochondrial morphogenesis, neuronal survival, and normal lifespan. Functionally, in the nucleus, serves as transcriptional co-regulator. In Gallus gallus (Chicken), this protein is Prohibitin-2 (PHB2).